We begin with the raw amino-acid sequence, 199 residues long: Protein-methionine-sulfoxide reductase heme-binding subunit MsrQ (199 aa).

The next 4 membrane-spanning stretches (helical) occupy residues 10–30 (WLKV…FWAI), 82–102 (LWCF…ELGI), 116–136 (PYLT…LTST), and 153–173 (VVYL…KILS).

It belongs to the MsrQ family. As to quaternary structure, heterodimer of a catalytic subunit (MsrP) and a heme-binding subunit (MsrQ). FMN serves as cofactor. Heme b is required as a cofactor.

The protein resides in the cell inner membrane. Its function is as follows. Part of the MsrPQ system that repairs oxidized periplasmic proteins containing methionine sulfoxide residues (Met-O), using respiratory chain electrons. Thus protects these proteins from oxidative-stress damage caused by reactive species of oxygen and chlorine generated by the host defense mechanisms. MsrPQ is essential for the maintenance of envelope integrity under bleach stress, rescuing a wide series of structurally unrelated periplasmic proteins from methionine oxidation, including the primary periplasmic chaperone SurA and the lipoprotein Pal. MsrQ provides electrons for reduction to the reductase catalytic subunit MsrP, using the quinone pool of the respiratory chain. The polypeptide is Protein-methionine-sulfoxide reductase heme-binding subunit MsrQ (Salmonella dublin (strain CT_02021853)).